Reading from the N-terminus, the 259-residue chain is Adenosylcobinamide-GDP ribazoletransferase (259 aa).

Helical transmembrane passes span 43-63 (LAGAVITAPAGLLLALMLGLG), 64-84 (ASSMVAAFAAIGLQVLLTGAL), 116-136 (FGVLALVFGVGLRVAALASLV), 141-161 (PINVALVMIGIAAVSRALMVW), and 185-205 (TLYTALFLGLAVAVVTIAPVT).

It belongs to the CobS family. Mg(2+) serves as cofactor.

The protein localises to the cell inner membrane. The enzyme catalyses alpha-ribazole + adenosylcob(III)inamide-GDP = adenosylcob(III)alamin + GMP + H(+). The catalysed reaction is alpha-ribazole 5'-phosphate + adenosylcob(III)inamide-GDP = adenosylcob(III)alamin 5'-phosphate + GMP + H(+). The protein operates within cofactor biosynthesis; adenosylcobalamin biosynthesis; adenosylcobalamin from cob(II)yrinate a,c-diamide: step 7/7. Its function is as follows. Joins adenosylcobinamide-GDP and alpha-ribazole to generate adenosylcobalamin (Ado-cobalamin). Also synthesizes adenosylcobalamin 5'-phosphate from adenosylcobinamide-GDP and alpha-ribazole 5'-phosphate. The protein is Adenosylcobinamide-GDP ribazoletransferase of Allorhizobium ampelinum (strain ATCC BAA-846 / DSM 112012 / S4) (Agrobacterium vitis (strain S4)).